A 470-amino-acid polypeptide reads, in one-letter code: MSTNEGSLWGGRFADGPADALAALSKSTHFDWVLAPYDVVASKAHARVLFRAGLLTEEQRDGLLAGLDSLGSDVADGSFGPLVSDEDVHGALERGLIDRVGPELGGRLRAGRSRNDQVATLFRLWLRDAVRRVADGVLEVVGALTTQAAAHPTAIMPGKTHLQSAQPVLLAHHLLAHAHPLLRDVDRLADFDKRAAVSPYGSGALAGSSLGLDPDAIAEELGFAAAADNSIDATASRDFAAEAAFVFSMIGVDLSRLAEDVILWSTTEFGYVELHDAWSTGSSIMPQKKNPDIAELARGKSGRLIGNLTGLLATLKAQPLAYNRDLQEDKEPVFDSVAQLELLLPAMAGLVATLRFDVDRMAELAPLGYTLATDVAEWLVRRGVPFRVAHEAAGAAVRAAEARGVGLEELEDAELAGIHPELTAEVRDVLSTEGSVNSRDARGGTAPIQVARQLGAVRDTADELRRRLRR.

This sequence belongs to the lyase 1 family. Argininosuccinate lyase subfamily.

Its subcellular location is the cytoplasm. It carries out the reaction 2-(N(omega)-L-arginino)succinate = fumarate + L-arginine. Its pathway is amino-acid biosynthesis; L-arginine biosynthesis; L-arginine from L-ornithine and carbamoyl phosphate: step 3/3. In Mycolicibacterium gilvum (strain PYR-GCK) (Mycobacterium gilvum (strain PYR-GCK)), this protein is Argininosuccinate lyase.